Reading from the N-terminus, the 273-residue chain is Undecaprenyl-diphosphatase (273 aa).

A run of 7 helical transmembrane segments spans residues 6-26 (SLLI…LPVS), 45-65 (AKTF…VMFW), 90-110 (LTLI…LLFH), 116-136 (LFNP…LIAA), 190-210 (YAAS…ATAL), 222-242 (GDIP…LIAI), and 252-272 (ISFI…YVVF).

This sequence belongs to the UppP family.

It is found in the cell inner membrane. It catalyses the reaction di-trans,octa-cis-undecaprenyl diphosphate + H2O = di-trans,octa-cis-undecaprenyl phosphate + phosphate + H(+). In terms of biological role, catalyzes the dephosphorylation of undecaprenyl diphosphate (UPP). Confers resistance to bacitracin. The protein is Undecaprenyl-diphosphatase of Escherichia coli O127:H6 (strain E2348/69 / EPEC).